The following is a 1514-amino-acid chain: ABC transporter C family member 5 (1514 aa).

10 helical membrane-spanning segments follow: residues leucine 16–valine 36, phenylalanine 76–leucine 96, phenylalanine 111–leucine 131, proline 142–valine 162, serine 177–tryptophan 197, valine 312–valine 332, tyrosine 334–threonine 354, tryptophan 421–tyrosine 441, isoleucine 446–alanine 466, and phenylalanine 533–leucine 553. Residues alanine 307–glutamine 588 form the ABC transmembrane type-1 1 domain. Residues isoleucine 622–alanine 845 form the ABC transporter 1 domain. Residue glycine 657–serine 664 coordinates ATP. The stretch at alanine 899 to valine 927 forms a coiled coil. The next 6 membrane-spanning stretches (helical) occupy residues glycine 946 to serine 966, proline 986 to valine 1006, isoleucine 1078 to valine 1098, isoleucine 1117 to alanine 1137, leucine 1155 to leucine 1175, and leucine 1180 to isoleucine 1200. In terms of domain architecture, ABC transmembrane type-1 2 spans isoleucine 949–asparagine 1231. Residues isoleucine 1268–threonine 1502 form the ABC transporter 2 domain. ATP is bound at residue glycine 1302–serine 1309.

It belongs to the ABC transporter superfamily. ABCC family. Conjugate transporter (TC 3.A.1.208) subfamily. As to expression, ubiquitous, mostly in vascular tissues and epidermis, including guard cells.

The protein localises to the membrane. It carries out the reaction ATP + H2O + xenobioticSide 1 = ADP + phosphate + xenobioticSide 2.. Its activity is regulated as follows. (E(2)17G) transport activity in negatively regulated by organic anions such as oestradiol-3-sulfate, luteolin-7-O-diglucuronide-4'-O-glucuronide, glycocholate, vanadate and the sulfonylurea glibenclamide, and, to a lower extent, by bafilomycin A1, NH(4)Cl, GSH, GSSG and DNB-GS. Its function is as follows. Pump for glutathione S-conjugates. Involved in regulation of K(+) and Na(+) cell content. Mediates resistance to NaCl and Li(+), confers sensitivity to sulfonylurea drugs such as glibenclamide (inducer of stomatal opening), and required for stomatal opening regulation by auxin, abscisic acid (ABA) and external Ca(2+). Transports oestradiol-17-(beta-D-glucuronide) (E(2)17G). Involved in the root auxin content regulation that controls the transition from primary root elongation to lateral root formation. Plays a role in ABA-mediated germination inhibition. High-affinity inositol hexakisphosphate transporter that plays a role in guard cell signaling and phytic acid storage. Required for phytic acid accumulation in developing seeds. Phytic acid is the primary storage form of phosphorus in cereal grains and other plant seeds. This Arabidopsis thaliana (Mouse-ear cress) protein is ABC transporter C family member 5 (ABCC5).